The following is a 183-amino-acid chain: Large ribosomal subunit protein uL5 (183 aa).

Belongs to the universal ribosomal protein uL5 family. Part of the 50S ribosomal subunit; part of the 5S rRNA/L5/L18/L25 subcomplex. Contacts the 5S rRNA and the P site tRNA. Forms a bridge to the 30S subunit in the 70S ribosome.

Its function is as follows. This is one of the proteins that bind and probably mediate the attachment of the 5S RNA into the large ribosomal subunit, where it forms part of the central protuberance. In the 70S ribosome it contacts protein S13 of the 30S subunit (bridge B1b), connecting the 2 subunits; this bridge is implicated in subunit movement. Contacts the P site tRNA; the 5S rRNA and some of its associated proteins might help stabilize positioning of ribosome-bound tRNAs. The sequence is that of Large ribosomal subunit protein uL5 from Legionella pneumophila (strain Lens).